A 134-amino-acid chain; its full sequence is MKVVHTVGKRKTAIARATAKEGKGRIRINKKPIEIVEPKYINAKLMEPIILAGDVVDGIDIDITVNGGGIVGQMDAARTALGKAIVEFTGDMELKDRFVHYDRTILISDARRTEPHKPSKSTKGPRAKRQKSYR.

A disordered region spans residues 109 to 134; it reads DARRTEPHKPSKSTKGPRAKRQKSYR. Over residues 118–134 the composition is skewed to basic residues; the sequence is PSKSTKGPRAKRQKSYR.

It belongs to the universal ribosomal protein uS9 family.

The polypeptide is Small ribosomal subunit protein uS9 (Methanococcus aeolicus (strain ATCC BAA-1280 / DSM 17508 / OCM 812 / Nankai-3)).